The sequence spans 57 residues: Conotoxin reg3.17 (57 aa).

A signal peptide spans 1–16; that stretch reads TICLLLFPLTVVPLDG. A propeptide spanning residues 17 to 44 is cleaved from the precursor; sequence DQPAHQPAVRKHNIKSAVQLRQWDEEQQ. 3 cysteine pairs are disulfide-bonded: Cys-45-Cys-57, Cys-46-Cys-53, and Cys-50-Cys-56.

It belongs to the conotoxin M superfamily. In terms of tissue distribution, expressed by the venom duct.

The protein localises to the secreted. The chain is Conotoxin reg3.17 from Conus regius (Crown cone).